Here is a 971-residue protein sequence, read N- to C-terminus: Protein cwh43 (971 aa).

A PGAP2-like region spans residues 1–242; the sequence is MTEKTSSLVF…PSSFATRKKE (242 aa). The next 19 membrane-spanning stretches (helical) occupy residues 15–35, 71–91, 101–121, 129–149, 161–181, 188–208, 286–306, 313–333, 336–356, 366–386, 397–417, 432–452, 467–487, 509–529, 532–552, 555–575, 588–608, 622–642, and 673–693; these read VALV…ALAL, VFQW…LLWF, VIIT…WVYV, WHDI…ILVS, IRNI…YWYI, IPGA…WDIL, VYLS…VWYF, ISGY…GIPL, KFAS…IAAY, FVTA…FSNI, ISTF…FFSN, QIPA…FHVQ, ITAL…HTFL, YPHG…APYL, SGAF…FMYI, GWCS…YSFA, VWGG…WVVA, TSYI…AYSG, and LLTG…NMPP. The interval 243-971 is PGAP2IP-like; sequence KGEHLSYAEA…LVVHEPWYYD (729 aa). The active site involves H826.

This sequence in the N-terminal section; belongs to the PGAP2 family. It in the C-terminal section; belongs to the PGAP2IP family.

The protein resides in the cell membrane. The protein localises to the endoplasmic reticulum membrane. Functionally, involved in the maintenance of cell wall integrity. Required for the replacement of the diacylglycerol moiety by ceramides during GPI-anchor maturation. In Schizosaccharomyces pombe (strain 972 / ATCC 24843) (Fission yeast), this protein is Protein cwh43 (cwh43).